Reading from the N-terminus, the 243-residue chain is Pyridoxine 5'-phosphate synthase (243 aa).

A 3-amino-2-oxopropyl phosphate-binding site is contributed by asparagine 9. 11–12 (DH) contacts 1-deoxy-D-xylulose 5-phosphate. Arginine 20 provides a ligand contact to 3-amino-2-oxopropyl phosphate. Catalysis depends on histidine 45, which acts as the Proton acceptor. Positions 47 and 52 each coordinate 1-deoxy-D-xylulose 5-phosphate. Residue glutamate 72 is the Proton acceptor of the active site. Position 102 (threonine 102) interacts with 1-deoxy-D-xylulose 5-phosphate. Histidine 193 serves as the catalytic Proton donor. 3-amino-2-oxopropyl phosphate is bound by residues glycine 194 and 215-216 (GH).

Belongs to the PNP synthase family. As to quaternary structure, homooctamer; tetramer of dimers.

The protein resides in the cytoplasm. It carries out the reaction 3-amino-2-oxopropyl phosphate + 1-deoxy-D-xylulose 5-phosphate = pyridoxine 5'-phosphate + phosphate + 2 H2O + H(+). The protein operates within cofactor biosynthesis; pyridoxine 5'-phosphate biosynthesis; pyridoxine 5'-phosphate from D-erythrose 4-phosphate: step 5/5. In terms of biological role, catalyzes the complicated ring closure reaction between the two acyclic compounds 1-deoxy-D-xylulose-5-phosphate (DXP) and 3-amino-2-oxopropyl phosphate (1-amino-acetone-3-phosphate or AAP) to form pyridoxine 5'-phosphate (PNP) and inorganic phosphate. This is Pyridoxine 5'-phosphate synthase from Vibrio vulnificus (strain CMCP6).